A 555-amino-acid polypeptide reads, in one-letter code: MNDLEEIVYKHALLNAAKHKGSANPGAVIGSIMSQEPDLRSRAKEIGPIAGKIVAQVNKLSEDEQSAQMAKYHVEVKENKQKKEEGLQELPGSHDNVVMRFAPNPSGPLHIGHARAAVPNAEYVKRYGGKLILRIEDTDPKRVFEPAYDLIPQDLEWLGIKADEVYYQSDRFEIYYDYARQLIEKGAAYMCTCDGATFKELKDNCKPCPCRDNSVEKNLELWDKFDQMHAGEAVLRVKTDINHKNPAIRDWVAMRIVEETHPRLGNKYRVYPMMNFSVAVDDHLMGMSHVLRGKDHLANSEKQKYLYDHMGWDVPEFIHYGRLKMEDIALSTSKALEGISSGKYSGWDDPRLGTLKAIARRGIQPQTIYNLITEIGVKMSDSAISWKKIYGLNRNFLEPIANRYFFVENPVEITVDGYEDGAVDIERPLHADHEDRGNRILPFAGKAYLASEDVKDGISRLMDAVNVDIDGDKITYNSTSFEQARDLKAKIIQWVPVEDNVNVSIVMDDASTKTGLGEGALKDLKVGDVVQFERVGFARLDEIKDNELVFYYAHK.

Positions 103–113 match the 'HIGH' region motif; the sequence is PNPSGPLHIGH.

Belongs to the class-I aminoacyl-tRNA synthetase family. Glutamate--tRNA ligase type 2 subfamily.

The protein localises to the cytoplasm. It catalyses the reaction tRNA(Glu) + L-glutamate + ATP = L-glutamyl-tRNA(Glu) + AMP + diphosphate. Catalyzes the attachment of glutamate to tRNA(Glu) in a two-step reaction: glutamate is first activated by ATP to form Glu-AMP and then transferred to the acceptor end of tRNA(Glu). The chain is Glutamate--tRNA ligase from Methanobrevibacter smithii (strain ATCC 35061 / DSM 861 / OCM 144 / PS).